Reading from the N-terminus, the 88-residue chain is Small ribosomal subunit protein bS20 (88 aa).

The segment at 1-20 (MANTAQARKRARQAVVQNAH) is disordered.

This sequence belongs to the bacterial ribosomal protein bS20 family.

Its function is as follows. Binds directly to 16S ribosomal RNA. The chain is Small ribosomal subunit protein bS20 from Ralstonia nicotianae (strain ATCC BAA-1114 / GMI1000) (Ralstonia solanacearum).